A 124-amino-acid chain; its full sequence is Large ribosomal subunit protein mL51 (124 aa).

The N-terminal 31 residues, 1–31, are a transit peptide targeting the mitochondrion; it reads MSVFGGLWRSAVNLCQSSRLFSTGSCARIRM.

Belongs to the mitochondrion-specific ribosomal protein mL51 family. Component of the mitochondrial ribosome large subunit (39S) which comprises a 16S rRNA and about 50 distinct proteins.

The protein localises to the mitochondrion. This Danio rerio (Zebrafish) protein is Large ribosomal subunit protein mL51 (mrpl51).